A 611-amino-acid polypeptide reads, in one-letter code: MDLRHLLLTLVLVCANDSLSASDDVLRLPQISKCRSPELETFSCYWTDGNFYNLSAPGTIQLLYMKRNDEDWKECPDYITAGENSCYFNTSYTSIWIPYCVKLVNKDEVFDEKCFSVDEIVLPDPPVHLNWTLLNTSQTGIHGDIQVRWDPPPTADVQKGWITLEYELQYKEVNETKWKELEPRLSTMVPLYSLKIGRDYEIRVRSRQRTSEKFGEFSEILYVSFSQAGIEFVHCAEEIEFPWFLVVIFGACGLAVTVILILLSKQSRLKMLIFPPVPVPKIKGIDPDLLKKGKLDEVNSILASHDNYKTQLYNDDLWVEFIELDIEDPDEKNRVSDTDRLLSEDHLKSHSCLGAKDDDSGRASCCEPDIPETDFSASDTCDAISDIDQFKKVTEKEEDLLCLGRKDNDESLPSLANTDTQQPRMSTRPENSQPWPPFADSIDAASPSAHNQLSNQNSLRNTDFYAQVSDITPAGSVVLSPGQKSKVARARCEFCTEQNFTLDNAYFCEADVKKCIAVISHEEDEPRVQAQICNEDTYFTTESLTTTGISLGASTAETPSPEVPVPDYTSIHIVHSPQGLVLNATALPVPDKEFNMSCGYVSTDQLNKIMP.

The first 20 residues, 1 to 20, serve as a signal peptide directing secretion; sequence MDLRHLLLTLVLVCANDSLS. Asn-16 is a glycosylation site (N-linked (GlcNAc...) asparagine). Topologically, residues 21 to 240 are extracellular; the sequence is ASDDVLRLPQ…EFVHCAEEIE (220 aa). Cys-34 and Cys-44 are oxidised to a cystine. Asn-53 carries an N-linked (GlcNAc...) asparagine glycan. Cys-75 and Cys-86 are disulfide-bonded. Asn-89 carries an N-linked (GlcNAc...) asparagine glycan. Cysteines 100 and 114 form a disulfide. In terms of domain architecture, Fibronectin type-III spans 125 to 228; that stretch reads PPVHLNWTLL…EILYVSFSQA (104 aa). Asn-130, Asn-135, and Asn-174 each carry an N-linked (GlcNAc...) asparagine glycan. The short motif at 214–218 is the WSXWS motif element; the sequence is FGEFS. A helical transmembrane segment spans residues 241 to 264; it reads FPWFLVVIFGACGLAVTVILILLS. The Cytoplasmic segment spans residues 265-611; that stretch reads KQSRLKMLIF…STDQLNKIMP (347 aa). A required for JAK2 binding region spans residues 270–355; the sequence is KMLIFPPVPV…HLKSHSCLGA (86 aa). Positions 273–281 match the Box 1 motif motif; it reads IFPPVPVPK. Positions 316-325 match the UbE motif motif; sequence DLWVEFIELD. The interval 411 to 455 is disordered; that stretch reads SLPSLANTDTQQPRMSTRPENSQPWPPFADSIDAASPSAHNQLSN. The span at 414-433 shows a compositional bias: polar residues; that stretch reads SLANTDTQQPRMSTRPENSQ.

The protein belongs to the type I cytokine receptor family. Type 1 subfamily. The soluble form (GHBP) is produced by phorbol ester-promoted proteolytic cleavage at the cell surface (shedding) by ADAM17/TACE.

It localises to the cell membrane. Its subcellular location is the secreted. In terms of biological role, receptor for pituitary gland growth hormone (GH1) involved in regulating postnatal body growth. On ligand binding, couples to the JAK2/STAT5 pathway. Its function is as follows. The soluble form (GHBP) acts as a reservoir of growth hormone in plasma and may be a modulator/inhibitor of GH signaling. This Columba livia (Rock dove) protein is Growth hormone receptor (GHR).